We begin with the raw amino-acid sequence, 381 residues long: Anhydro-N-acetylmuramic acid kinase (381 aa).

22 to 29 (GTSIDGID) contributes to the ATP binding site.

It belongs to the anhydro-N-acetylmuramic acid kinase family.

The catalysed reaction is 1,6-anhydro-N-acetyl-beta-muramate + ATP + H2O = N-acetyl-D-muramate 6-phosphate + ADP + H(+). It participates in amino-sugar metabolism; 1,6-anhydro-N-acetylmuramate degradation. Its pathway is cell wall biogenesis; peptidoglycan recycling. Functionally, catalyzes the specific phosphorylation of 1,6-anhydro-N-acetylmuramic acid (anhMurNAc) with the simultaneous cleavage of the 1,6-anhydro ring, generating MurNAc-6-P. Is required for the utilization of anhMurNAc either imported from the medium or derived from its own cell wall murein, and thus plays a role in cell wall recycling. The protein is Anhydro-N-acetylmuramic acid kinase of Xylella fastidiosa (strain Temecula1 / ATCC 700964).